The primary structure comprises 313 residues: MKKQLIIGTRSSPLALWQAEFTKAELSKHYPDMEITLKLVKTTGDVLLDSPLSKIGDMGLFTKDIEKHLLAREIDLAVHSLKDVPTSTPEGLIITSFTEREDTRDVIISKGGVKLKDLPPNARMATSSLRRMSQLLSVRPDLDIRDIRGNLNTRFQKFDDGEFDAMMLAYAGVYRLNFSDRISEILPHDMMLPAVGQGALGIETRVDDEQTREIVRILNHSTTEYCCRAERALLRHLQGGCQIPIGAYATFSNGTLKLLAFVGSVDGKTALRNEITKTGLTSPEQAEEAGIALAEELLKQGADAILSQIRKTC.

S-(dipyrrolylmethanemethyl)cysteine is present on Cys241.

This sequence belongs to the HMBS family. Monomer. Dipyrromethane is required as a cofactor.

It catalyses the reaction 4 porphobilinogen + H2O = hydroxymethylbilane + 4 NH4(+). It functions in the pathway porphyrin-containing compound metabolism; protoporphyrin-IX biosynthesis; coproporphyrinogen-III from 5-aminolevulinate: step 2/4. It participates in porphyrin-containing compound metabolism; chlorophyll biosynthesis. In terms of biological role, tetrapolymerization of the monopyrrole PBG into the hydroxymethylbilane pre-uroporphyrinogen in several discrete steps. The chain is Porphobilinogen deaminase from Chlorobium chlorochromatii (strain CaD3).